The primary structure comprises 107 residues: Small ribosomal subunit protein uS10 (107 aa).

Belongs to the universal ribosomal protein uS10 family. As to quaternary structure, part of the 30S ribosomal subunit.

In terms of biological role, involved in the binding of tRNA to the ribosomes. The protein is Small ribosomal subunit protein uS10 of Deinococcus deserti (strain DSM 17065 / CIP 109153 / LMG 22923 / VCD115).